Consider the following 481-residue polypeptide: Proline--tRNA ligase (481 aa).

It belongs to the class-II aminoacyl-tRNA synthetase family. ProS type 3 subfamily. As to quaternary structure, homodimer.

Its subcellular location is the cytoplasm. It carries out the reaction tRNA(Pro) + L-proline + ATP = L-prolyl-tRNA(Pro) + AMP + diphosphate. In terms of biological role, catalyzes the attachment of proline to tRNA(Pro) in a two-step reaction: proline is first activated by ATP to form Pro-AMP and then transferred to the acceptor end of tRNA(Pro). This Thermococcus kodakarensis (strain ATCC BAA-918 / JCM 12380 / KOD1) (Pyrococcus kodakaraensis (strain KOD1)) protein is Proline--tRNA ligase.